A 400-amino-acid chain; its full sequence is Probable cysteine protease atg4 (400 aa).

Catalysis depends on C131, which acts as the Nucleophile. Active-site residues include D305 and H307.

This sequence belongs to the peptidase C54 family.

The protein localises to the cytoplasm. It localises to the nucleus. The protein resides in the preautophagosomal structure. The catalysed reaction is [protein]-C-terminal L-amino acid-glycyl-phosphatidylethanolamide + H2O = [protein]-C-terminal L-amino acid-glycine + a 1,2-diacyl-sn-glycero-3-phosphoethanolamine. In terms of biological role, cysteine protease that plays a key role in cytoplasm to vacuole transport (Cvt) and autophagy by mediating both proteolytic activation and delipidation of ATG8. Required for selective autophagic degradation of the nucleus (nucleophagy) as well as for mitophagy which contributes to regulate mitochondrial quantity and quality by eliminating the mitochondria to a basal level to fulfill cellular energy requirements and preventing excess ROS production. The protease activity is required for proteolytic activation of ATG8: cleaves the C-terminal amino acid of ATG8 to reveal a C-terminal glycine. ATG8 ubiquitin-like activity requires the exposure of the glycine at the C-terminus for its conjugation to phosphatidylethanolamine (PE) and its insertion to membranes, which is necessary for autophagy. The ATG8-PE conjugate mediates tethering between adjacent membranes and stimulates membrane hemifusion, leading to expansion of the autophagosomal membrane during autophagy. In addition to the protease activity, also catalyzes deconjugation of PE-conjugated forms of ATG8 during macroautophagy: ATG8 delipidation is required to release the protein from membranes, which facilitates multiple events during macroautophagy, and especially for efficient autophagosome biogenesis, the assembly of ATG9-containing tubulovesicular clusters into phagophores/autophagosomes, and for the disassembly of PAS-associated ATG components. ATG8 delipidation by ATG4 also recycles ATG8-PE generated on inappropriate membranes to maintain a reservoir of unlipidated ATG8 that is required for autophagosome formation at the PAS. This Aspergillus clavatus (strain ATCC 1007 / CBS 513.65 / DSM 816 / NCTC 3887 / NRRL 1 / QM 1276 / 107) protein is Probable cysteine protease atg4 (atg4).